The primary structure comprises 380 residues: RNA binding protein fox-1 homolog 2 (380 aa).

Composition is skewed to polar residues over residues 1–20 and 36–56; these read MEKN…TPDT and NGLS…QSTE. Positions 1–117 are disordered; it reads MEKNKMVSQG…TPKRLHVSNI (117 aa). A compositionally biased stretch (low complexity) spans 72-102; that stretch reads STPATSTANASSTTDGSQTEGQQSQTQNSEN. One can recognise an RRM domain in the interval 110 to 186; that stretch reads KRLHVSNIPF…RKIEVNNATA (77 aa).

The protein resides in the nucleus. Its subcellular location is the cytoplasm. In terms of biological role, RNA-binding protein that regulates alternative splicing events by binding to 5'-UGCAUGU-3' elements. Regulates alternative splicing of tissue-specific exons. The chain is RNA binding protein fox-1 homolog 2 (rbfox2) from Xenopus tropicalis (Western clawed frog).